We begin with the raw amino-acid sequence, 479 residues long: NAC domain-containing protein 45 (479 aa).

The NAC domain occupies 6-157 (LPPGFRFHPT…AYALCRVFKK (152 aa)). Residues 105–163 (IGTKKTLVYYRGRAPHGIRTGWVMHEYRLDETECEPSAYGMQDAYALCRVFKKIVIEAK) mediate DNA binding.

In terms of tissue distribution, expressed in a few sieve element cells before enucleation and in phloem-pole pericycle cells.

The protein resides in the nucleus. Functionally, transcription factor directing sieve element enucleation and cytosol degradation. Not required for formation of lytic vacuoles. Regulates, with NAC086, the transcription of NEN1, NEN2, NEN3, NEN4, RTM1, RTM2, UBP16, PLDZETA, ABCB10 and At1g26450. This Arabidopsis thaliana (Mouse-ear cress) protein is NAC domain-containing protein 45.